A 720-amino-acid chain; its full sequence is Engulfment and cell motility protein 3 (720 aa).

The ELMO domain occupies 307 to 479 (EQRDQLQALR…VVREQLARTL (173 aa)). Residues 542 to 664 (RLCEGMLFRK…TDGLSALLGS (123 aa)) form the PH domain. The SH3-binding motif lies at 696 to 706 (PEQPPPVPPPP).

In terms of assembly, probably interacts directly with the SH3-domain of DOCK1 via its SH3-binding site. Part of a complex with DOCK1 and RAC1. Interacts with ADGRB3.

Its subcellular location is the cytoplasm. Functionally, involved in cytoskeletal rearrangements required for phagocytosis of apoptotic cells and cell motility. Acts in association with DOCK1 and CRK. Was initially proposed to be required in complex with DOCK1 to activate Rac Rho small GTPases. May enhance the guanine nucleotide exchange factor (GEF) activity of DOCK1. This chain is Engulfment and cell motility protein 3 (Elmo3), found in Mus musculus (Mouse).